A 304-amino-acid chain; its full sequence is Acetylglutamate kinase (304 aa).

Residues 72 to 73 (GG), Arg94, and Asn199 each bind substrate.

Belongs to the acetylglutamate kinase family. ArgB subfamily.

Its subcellular location is the cytoplasm. The enzyme catalyses N-acetyl-L-glutamate + ATP = N-acetyl-L-glutamyl 5-phosphate + ADP. It participates in amino-acid biosynthesis; L-arginine biosynthesis; N(2)-acetyl-L-ornithine from L-glutamate: step 2/4. Catalyzes the ATP-dependent phosphorylation of N-acetyl-L-glutamate. This Methylobacterium nodulans (strain LMG 21967 / CNCM I-2342 / ORS 2060) protein is Acetylglutamate kinase.